We begin with the raw amino-acid sequence, 196 residues long: Large ribosomal subunit protein bL25 (196 aa).

The protein belongs to the bacterial ribosomal protein bL25 family. CTC subfamily. In terms of assembly, part of the 50S ribosomal subunit; part of the 5S rRNA/L5/L18/L25 subcomplex. Contacts the 5S rRNA. Binds to the 5S rRNA independently of L5 and L18.

Its function is as follows. This is one of the proteins that binds to the 5S RNA in the ribosome where it forms part of the central protuberance. This is Large ribosomal subunit protein bL25 from Treponema pallidum subsp. pallidum (strain SS14).